Reading from the N-terminus, the 154-residue chain is MNFEGKLIGKDLKVAIVVSRFNDFITGRLLEGAKDTLIRHDVNEDNIDVAFVPGAFEIPLVAKKLASSGNYDAIITLGCVIRGATSHYDYVCNEVAKGVSKVNDQTNVPVIFGILTTESIEQAVERAGTKAGNKGAEAAVSAIEMANLLKSIKA.

5-amino-6-(D-ribitylamino)uracil contacts are provided by residues Phe21, 55 to 57 (AFE), and 79 to 81 (CVI). Residue 84–85 (AT) coordinates (2S)-2-hydroxy-3-oxobutyl phosphate. His87 functions as the Proton donor in the catalytic mechanism. Phe112 lines the 5-amino-6-(D-ribitylamino)uracil pocket. Arg126 contacts (2S)-2-hydroxy-3-oxobutyl phosphate.

This sequence belongs to the DMRL synthase family. Forms an icosahedral capsid composed of 60 subunits, arranged as a dodecamer of pentamers.

It carries out the reaction (2S)-2-hydroxy-3-oxobutyl phosphate + 5-amino-6-(D-ribitylamino)uracil = 6,7-dimethyl-8-(1-D-ribityl)lumazine + phosphate + 2 H2O + H(+). Its pathway is cofactor biosynthesis; riboflavin biosynthesis; riboflavin from 2-hydroxy-3-oxobutyl phosphate and 5-amino-6-(D-ribitylamino)uracil: step 1/2. Catalyzes the formation of 6,7-dimethyl-8-ribityllumazine by condensation of 5-amino-6-(D-ribitylamino)uracil with 3,4-dihydroxy-2-butanone 4-phosphate. This is the penultimate step in the biosynthesis of riboflavin. The protein is 6,7-dimethyl-8-ribityllumazine synthase of Staphylococcus aureus (strain Mu50 / ATCC 700699).